A 230-amino-acid chain; its full sequence is Small ribosomal subunit protein uS2 (230 aa).

Belongs to the universal ribosomal protein uS2 family.

This chain is Small ribosomal subunit protein uS2, found in Prochlorococcus marinus (strain NATL2A).